Consider the following 962-residue polypeptide: Rho GTPase-activating protein syd-1 (962 aa).

3 disordered regions span residues 231-367, 397-419, and 437-471; these read GKKS…MRSD, PRTL…RIMT, and CGEE…NGSP. Composition is skewed to polar residues over residues 243–261, 323–345, 401–412, and 453–471; these read NATT…SSPR, SFNS…SSTA, RQPNDSNKSNSL, and PPFS…NGSP. The region spanning 572–696 is the C2 domain; that stretch reads RAAGPGINVD…NDDRVFALNL (125 aa). Residues 729-923 form the Rho-GAP domain; the sequence is VPLGRLVQRE…LDMNQASSSL (195 aa). Polar residues predominate over residues 934–947; the sequence is VNSESGSDSPATSG. The tract at residues 934-962 is disordered; that stretch reads VNSESGSDSPATSGQKGGGGVSYVSESQC.

It localises to the synapse. Its function is as follows. Probable GTPase activator for the Rho-type GTPases by converting them to an inactive GDP-bound state. Regulates the localization and assembly of presynaptic components during presynaptic development and is required for specifying the identity of axons during initial polarity acquisition. In these roles it is thought to act cell autonomously downstream of syg-1 and syg-2 and upstream of syd-2, possibly as a positive regulator of the latter. Required for the control of movement, egg-laying and the correct localization of elks-1. This is Rho GTPase-activating protein syd-1 from Caenorhabditis briggsae.